The sequence spans 417 residues: NADH-quinone oxidoreductase subunit D (417 aa).

The protein belongs to the complex I 49 kDa subunit family. As to quaternary structure, NDH-1 is composed of 14 different subunits. Subunits NuoB, C, D, E, F, and G constitute the peripheral sector of the complex.

It localises to the cell inner membrane. The enzyme catalyses a quinone + NADH + 5 H(+)(in) = a quinol + NAD(+) + 4 H(+)(out). Functionally, NDH-1 shuttles electrons from NADH, via FMN and iron-sulfur (Fe-S) centers, to quinones in the respiratory chain. The immediate electron acceptor for the enzyme in this species is believed to be ubiquinone. Couples the redox reaction to proton translocation (for every two electrons transferred, four hydrogen ions are translocated across the cytoplasmic membrane), and thus conserves the redox energy in a proton gradient. The sequence is that of NADH-quinone oxidoreductase subunit D from Methylobacillus flagellatus (strain ATCC 51484 / DSM 6875 / VKM B-1610 / KT).